The primary structure comprises 475 residues: Sulfate adenylyltransferase subunit 1 (475 aa).

A tr-type G domain is found at 25–239; the sequence is KSLLRFLTCG…EVLETVEIQR (215 aa). Positions 34–41 are G1; sequence GSVDDGKS. 34–41 provides a ligand contact to GTP; sequence GSVDDGKS. The segment at 92-96 is G2; the sequence is GITID. The G3 stretch occupies residues 113–116; that stretch reads DTPG. GTP contacts are provided by residues 113–117 and 168–171; these read DTPGH and NKMD. The G4 stretch occupies residues 168 to 171; sequence NKMD. A G5 region spans residues 206-208; sequence SAL.

This sequence belongs to the TRAFAC class translation factor GTPase superfamily. Classic translation factor GTPase family. CysN/NodQ subfamily. As to quaternary structure, heterodimer composed of CysD, the smaller subunit, and CysN.

The catalysed reaction is sulfate + ATP + H(+) = adenosine 5'-phosphosulfate + diphosphate. It participates in sulfur metabolism; hydrogen sulfide biosynthesis; sulfite from sulfate: step 1/3. In terms of biological role, with CysD forms the ATP sulfurylase (ATPS) that catalyzes the adenylation of sulfate producing adenosine 5'-phosphosulfate (APS) and diphosphate, the first enzymatic step in sulfur assimilation pathway. APS synthesis involves the formation of a high-energy phosphoric-sulfuric acid anhydride bond driven by GTP hydrolysis by CysN coupled to ATP hydrolysis by CysD. The sequence is that of Sulfate adenylyltransferase subunit 1 from Escherichia coli O139:H28 (strain E24377A / ETEC).